Reading from the N-terminus, the 353-residue chain is uncharacterized protein (353 aa).

An N-terminal signal peptide occupies residues 1–24 (MRVVKRIAVACYLGITIFSGIAFG).

This sequence belongs to the chlamydial CPn_1058/CT_355/TC_0634 family.

This is an uncharacterized protein from Chlamydia muridarum (strain MoPn / Nigg).